A 160-amino-acid polypeptide reads, in one-letter code: Ureidoglycolate lyase (160 aa).

The protein belongs to the ureidoglycolate lyase family. As to quaternary structure, homodimer. Requires Ni(2+) as cofactor.

It carries out the reaction (S)-ureidoglycolate = urea + glyoxylate. The protein operates within nitrogen metabolism; (S)-allantoin degradation. Functionally, catalyzes the catabolism of the allantoin degradation intermediate (S)-ureidoglycolate, generating urea and glyoxylate. Involved in the utilization of allantoin as nitrogen source. This is Ureidoglycolate lyase from Salmonella gallinarum (strain 287/91 / NCTC 13346).